Consider the following 104-residue polypeptide: Gastrin (104 aa).

A signal peptide spans 1–21 (MPRLCVCMLVLVLALATFSEA). The propeptide occupies 22 to 58 (SWKPRSQLQDASSGPRTNGALEQHQLEKLGPASHHRR). The segment at 23 to 104 (WKPRSQLQDA…RSAEEEDQYN (82 aa)) is disordered. Polar residues predominate over residues 25 to 37 (PRSQLQDASSGPR). Position 87 is a sulfotyrosine (Tyr-87). A Phenylalanine amide modification is found at Phe-92. A Phosphoserine modification is found at Ser-96. A propeptide spanning residues 96-104 (SAEEEDQYN) is cleaved from the precursor. Tyr-103 carries the sulfotyrosine modification.

Belongs to the gastrin/cholecystokinin family. In terms of processing, sulfation on Tyr-87 enhances proteolytic processing, and blocks peptide degradation. Levels of sulfation differ between proteolytically-cleaved gastrins and between tissues.

It localises to the secreted. Gastrin stimulates the stomach mucosa to produce and secrete hydrochloric acid and the pancreas to secrete its digestive enzymes. It also stimulates smooth muscle contraction and increases blood circulation and water secretion in the stomach and intestine. The chain is Gastrin (Gast) from Rattus norvegicus (Rat).